The sequence spans 655 residues: MVNEPRGNGSPGPRWEGSSSGSESSRTSSRCSTPGLDPERCERLREKMKRKMDSGDKWFSLEFFPPRTAQGAVNLISRFDRMGAGGPLFVDVTWHPAGDPGSDKETSSMVIASTAVNYCGLETILHMTCCHQSREEITGHLNKAKQLGLKNILALRGDPIGDQWEEEEGGFNYATDLVKHIRNEFGDYFDVCVAGYPKGHPEGESFEADLKHLKEKVAAGADFIITQLFFEAETFFRFVKACSEIGITCPVLPGIFPIQGYHSLRQLVKLSKLEVPQQIKDVIEPIKDNDAAIRNYGIEQAVSLCQELLASGLVPGLHFYTLNREVATIEVLKRLGLWIEDPRRPLPWALSAHPKRRVEDVRPIFWASRPKSYIYRTQEWDEFPNGRWGNSSSPAFGELKDYYLFYLKSKSPKEELLKMWGEELTSEESVFQVFAHHLSGEPNQNGYKVTCLPWNDEPLAAETSLMKEELLRVNRRGILTINSQPNINGKPSSDPIVGWGPSGGYVFQKAYLEFFTSRETVEALLQVLKKYELRVNYHIVDVKGENITNAPELQPNAVTWGIFPGREIIQPTVVDPVSFMFWKDEAFALWIEQWGKLYEEESPSRMIIQYIHDNYFLVNLVDNEFPLDNCLWQVVEDTFELLSRPPQDKRETEAL.

Positions 1 to 39 are disordered; sequence MVNEPRGNGSPGPRWEGSSSGSESSRTSSRCSTPGLDPE. A phosphoserine mark is found at Ser-10, Ser-18, Ser-19, Ser-20, Ser-22, Ser-24, Ser-25, Ser-28, and Ser-29. Positions 11–35 are enriched in low complexity; it reads PGPRWEGSSSGSESSRTSSRCSTPG. At Thr-33 the chain carries Phosphothreonine. The active-site Proton donor/acceptor is the Glu-62. NAD(+)-binding positions include 62–67 and 93–94; these read EFFPPR and TW. A Phosphothreonine modification is found at Thr-93. 93-94 is an FAD binding site; it reads TW. Ser-102 carries the phosphoserine modification. FAD contacts are provided by residues His-126, 156 to 158, 173 to 174, Tyr-196, 200 to 203, Asp-209, and Lys-216; these read RGD, YA, and HPEG. Asp-158 contributes to the substrate binding site. Gln-227, Tyr-320, and Arg-324 together coordinate substrate. Position 393 is a phosphoserine (Ser-393). At Thr-450 the chain carries Phosphothreonine. Residues Asn-455, 460–463, 480–484, Thr-559, and Thr-572 each bind S-adenosyl-L-methionine; these read AAET and TINSQ.

It belongs to the methylenetetrahydrofolate reductase family. Homodimer. FAD serves as cofactor. Post-translationally, phosphorylation of an N-terminal serine-rich phosphorylation region increases sensitivity to S-adenosylmethionine and inhibition.

It catalyses the reaction (6S)-5-methyl-5,6,7,8-tetrahydrofolate + NADP(+) = (6R)-5,10-methylene-5,6,7,8-tetrahydrofolate + NADPH + H(+). It functions in the pathway one-carbon metabolism; tetrahydrofolate interconversion. With respect to regulation, allosterically regulated by S-adenosylmethionine (SAM). Catalyzes the conversion of 5,10-methylenetetrahydrofolate to 5-methyltetrahydrofolate, a cosubstrate for homocysteine remethylation to methionine. Represents a key regulatory connection between the folate and methionine cycles. The protein is Methylenetetrahydrofolate reductase (NADPH) (MTHFR) of Bos taurus (Bovine).